Reading from the N-terminus, the 511-residue chain is Maturase K (511 aa).

This sequence belongs to the intron maturase 2 family. MatK subfamily.

It is found in the plastid. The protein localises to the chloroplast. Functionally, usually encoded in the trnK tRNA gene intron. Probably assists in splicing its own and other chloroplast group II introns. This Primula veris (Cowslip) protein is Maturase K.